A 52-amino-acid chain; its full sequence is uncharacterized protein (52 aa).

The tract at residues 1 to 52 (MFGFIYRDPSPAPQGKIRDGSKDPKTPGGGGGGGGGISPNGGAPLGGKGFSM) is disordered. The span at 16-25 (KIRDGSKDPK) shows a compositional bias: basic and acidic residues. Over residues 27–52 (PGGGGGGGGGISPNGGAPLGGKGFSM) the composition is skewed to gly residues.

This is an uncharacterized protein from Dictyostelium discoideum (Social amoeba).